Here is a 180-residue protein sequence, read N- to C-terminus: Adenine phosphoribosyltransferase (180 aa).

It belongs to the purine/pyrimidine phosphoribosyltransferase family. In terms of assembly, homodimer.

Its subcellular location is the cytoplasm. The catalysed reaction is AMP + diphosphate = 5-phospho-alpha-D-ribose 1-diphosphate + adenine. Its pathway is purine metabolism; AMP biosynthesis via salvage pathway; AMP from adenine: step 1/1. Its function is as follows. Catalyzes a salvage reaction resulting in the formation of AMP, that is energically less costly than de novo synthesis. The sequence is that of Adenine phosphoribosyltransferase from Marinomonas sp. (strain MWYL1).